A 530-amino-acid polypeptide reads, in one-letter code: Ubiquitin carboxyl-terminal hydrolase 17-like protein 5 (530 aa).

The USP domain maps to 80–375; sequence AGLQNMGNTC…QAYVLFYIQK (296 aa). Cysteine 89 acts as the Nucleophile in catalysis. Histidine 334 acts as the Proton acceptor in catalysis. Basic and acidic residues-rich tracts occupy residues 382-392 and 398-412; these read SESVSRGREPR and DTDR…KRDH. 2 disordered regions span residues 382 to 412 and 477 to 530; these read SESV…KRDH and NHHP…LVCQ. Polar residues predominate over residues 493–505; sequence TPTHQESMNTGTL. The segment covering 510–524 has biased composition (basic residues); that stretch reads GRARRSKGKNKHSKR.

The protein belongs to the peptidase C19 family. USP17 subfamily.

It localises to the nucleus. Its subcellular location is the endoplasmic reticulum. It catalyses the reaction Thiol-dependent hydrolysis of ester, thioester, amide, peptide and isopeptide bonds formed by the C-terminal Gly of ubiquitin (a 76-residue protein attached to proteins as an intracellular targeting signal).. Functionally, deubiquitinating enzyme that removes conjugated ubiquitin from specific proteins to regulate different cellular processes that may include cell proliferation, progression through the cell cycle, apoptosis, cell migration, and the cellular response to viral infection. This chain is Ubiquitin carboxyl-terminal hydrolase 17-like protein 5 (USP17L5), found in Homo sapiens (Human).